A 230-amino-acid polypeptide reads, in one-letter code: Ribonuclease 3 (230 aa).

The RNase III domain maps to 19–134; sequence ELLTIALTHR…LLGAIYLEHG (116 aa). Glu44 is a binding site for Mg(2+). Residue Asp48 is part of the active site. Residues Asp120 and Glu123 each contribute to the Mg(2+) site. Positions 161–229 constitute a DRBM domain; sequence DWKSSLQELT…AASAYKTLDE (69 aa).

This sequence belongs to the ribonuclease III family. As to quaternary structure, homodimer. Requires Mg(2+) as cofactor.

Its subcellular location is the cytoplasm. It catalyses the reaction Endonucleolytic cleavage to 5'-phosphomonoester.. Functionally, digests double-stranded RNA. Involved in the processing of primary rRNA transcript to yield the immediate precursors to the all rRNAs (23S, 16S and 5S). Processes some mRNAs, and tRNAs when they are encoded in the rRNA operon. Processes pre-crRNA and tracrRNA of type II CRISPR loci if present in the organism. In Mycolicibacterium smegmatis (strain ATCC 700084 / mc(2)155) (Mycobacterium smegmatis), this protein is Ribonuclease 3 (rnc).